Reading from the N-terminus, the 757-residue chain is UDP-N-acetylmuramoyl-L-alanyl-D-glutamate--2,6-diaminopimelate ligase MurE homolog, chloroplastic (757 aa).

The span at 1 to 11 shows a compositional bias: low complexity; the sequence is MATAPLAFHLP. The transit peptide at 1-53 directs the protein to the chloroplast; that stretch reads MATAPLAFHLPFPFPSASRPPPRLLPPSRRPPAARLAATRRFRPPTADDEPPE. Disordered stretches follow at residues 1 to 112, 126 to 152, and 172 to 195; these read MATA…DEFF, FTRR…ADEL, and VSLA…GDDG. Pro residues predominate over residues 12 to 30; it reads FPFPSASRPPPRLLPPSRR. 2 stretches are compositionally biased toward acidic residues: residues 47-56 and 142-152; these read ADDEPPEAAE and PEEEDGLADEL.

This sequence belongs to the MurCDEF family. MurE subfamily. In terms of assembly, component of the plastid-encoded plastid RNA polymerase (PEP) complex.

Its subcellular location is the plastid. It is found in the chloroplast. Required for the activity of the plastid-encoded RNA polymerase (PEP) and full expression of genes transcribed by PEP. The chain is UDP-N-acetylmuramoyl-L-alanyl-D-glutamate--2,6-diaminopimelate ligase MurE homolog, chloroplastic from Oryza sativa subsp. japonica (Rice).